Here is an 82-residue protein sequence, read N- to C-terminus: Small ribosomal subunit protein uS17 (82 aa).

Belongs to the universal ribosomal protein uS17 family. As to quaternary structure, part of the 30S ribosomal subunit.

Its function is as follows. One of the primary rRNA binding proteins, it binds specifically to the 5'-end of 16S ribosomal RNA. The chain is Small ribosomal subunit protein uS17 from Shewanella sp. (strain MR-7).